The chain runs to 975 residues: MQSFLPLLMGIMASASSVEWRHPVIWFNSKVVQSSEVVVKPGTSLELKCGGDGPVNWQTRLPKHKRYMSRSPGNLRTIRVARPTAEFTGTYKCFYSAWAQHRHLTSSVHVYVKDPNRVFWTSSTSLRVVRKEGEDYLLPCLLTDPEATDLGLRMDNGTTVPPEMNYTVYRHRGILIRSLQPSFNADYVCTAKVKGVEKTSKTFSINVIQKLRFPPYVFLEMDEYVRIVGEELQIRCMTHNPNFNYNVTWNYTTKSRVTIEERVRSSGENRLDIQSILTISAVDLADTGNISCIGTNEAGVNSSNTYLLVVEKPYIRLWPQLIPKLASQGLSVEVNEGEDLELGVMVEAYPQITDHRWHTPTSPSTSMQEHIYHARLQLKRMNAQEQGQYTFYAKSNLANGSISFHVKMYQKPIAVVRWENITTLTCTSFGYPAPQIIWYQCSGIRPTCNGNNTGLPKQNHPQALTVEVQREEYGAVEVESVFTVGLSNHRMTVECVAFNLVGVSSDTFTVEVSDKLFTSTLIGAAGVLAIFLLLLVFLLYKYKQKPRFEIRWKIIEAREGNNYTFIDPTQLPYNEKWEFPRDKLKLGKVLGAGAFGKVVEATAFGLGEDKDNTLRVAVKMLKANAHSDEREALMSELKILSHLGHHQNIVNLLGACTYGGPVLVITEYCSLGDLLNFLRQKAETFVNLVMNIPEIMENSNDYKNICNQKWYIRSDSGISSTSSSTYLEMRPSQQSHIEASGRKSLCEDNGDWPLDIDDLLRFSLQVAQGLDFLASRNCIHRDVAARNVLLTDKRVAKICDFGLARDIMNDSNYVVKGNARLPVKWMAPESIFDCVYTVQSDVWSYGILLWEIFSLGKSPYPSMAVDSRFYKMVKRGYQMSQPDFALPEIYMIMKMCWNLEPTERPTFSMISQMINRLLGGQDEQEKLIYRNVQPEQVAEGEACDEPKRYDPPCERSCDHEEEEEPLMKTNNYQFC.

The signal sequence occupies residues 1–17 (MQSFLPLLMGIMASASS). The Extracellular segment spans residues 18–519 (VEWRHPVIWF…VEVSDKLFTS (502 aa)). Ig-like C2-type domains lie at 34-113 (SSEV…VYVK), 125-208 (SLRV…INVI), 221-310 (MDEY…LLVV), 329-407 (GLSV…FHVK), and 404-513 (FHVK…VEVS). 3 disulfides stabilise this stretch: cysteine 49–cysteine 93, cysteine 140–cysteine 189, and cysteine 236–cysteine 292. 9 N-linked (GlcNAc...) asparagine glycosylation sites follow: asparagine 156, asparagine 165, asparagine 246, asparagine 250, asparagine 289, asparagine 301, asparagine 399, asparagine 420, and asparagine 451. Cysteine 426 and cysteine 495 are disulfide-bonded. Residues 520-540 (TLIGAAGVLAIFLLLLVFLLY) traverse the membrane as a helical segment. Residues 541–975 (KYKQKPRFEI…LMKTNNYQFC (435 aa)) lie on the Cytoplasmic side of the membrane. Residues 544-576 (QKPRFEIRWKIIEAREGNNYTFIDPTQLPYNEK) form a regulatory juxtamembrane domain region. Tyrosine 563 is modified (phosphotyrosine; by autocatalysis). Residues 584–918 (LKLGKVLGAG…MISQMINRLL (335 aa)) enclose the Protein kinase domain. ATP-binding positions include 590–598 (LGAGAFGKV) and lysine 619. 2 positions are modified to phosphotyrosine; by autocatalysis: tyrosine 702 and tyrosine 726. Aspartate 782 (proton acceptor) is an active-site residue. Residues 800–822 (DFGLARDIMNDSNYVVKGNARLP) are activation loop. Phosphotyrosine; by autocatalysis is present on residues tyrosine 813 and tyrosine 929. A disordered region spans residues 939-963 (EGEACDEPKRYDPPCERSCDHEEEE). Residues 944–958 (DEPKRYDPPCERSCD) are compositionally biased toward basic and acidic residues. Phosphotyrosine; by autocatalysis is present on tyrosine 972.

Belongs to the protein kinase superfamily. Tyr protein kinase family. CSF-1/PDGF receptor subfamily. As to quaternary structure, monomer. Homodimer. Interacts with CSF1. Post-translationally, autophosphorylated in response to CSF1 binding. autophosphorylation, leading to its degradation. Ubiquitinated. Becomes rapidly polyubiquitinated after autophosphorylation, leading to its degradation.

The protein localises to the cell membrane. It catalyses the reaction L-tyrosyl-[protein] + ATP = O-phospho-L-tyrosyl-[protein] + ADP + H(+). With respect to regulation, present in an inactive conformation in the absence of bound ligand. CSF1 binding leads to dimerization and activation by autophosphorylation on tyrosine residues. In terms of biological role, tyrosine-protein kinase that acts as a cell-surface receptor for CSF1 and plays an essential role in the regulation of survival, proliferation and differentiation of hematopoietic precursor cells, especially mononuclear phagocytes, such as macrophages and monocytes. Plays an important role in innate immunity and in inflammatory processes. Plays an important role in the regulation of osteoclast proliferation and differentiation, the regulation of bone resorption, and is required for normal bone development. Promotes reorganization of the actin cytoskeleton, regulates formation of membrane ruffles, cell adhesion and cell migration. Activates several signaling pathways in response to ligand binding. This is Macrophage colony-stimulating factor 1 receptor 1 (csf1r1) from Takifugu rubripes (Japanese pufferfish).